Here is a 269-residue protein sequence, read N- to C-terminus: Formamidopyrimidine-DNA glycosylase (269 aa).

Pro-2 acts as the Schiff-base intermediate with DNA in catalysis. Glu-3 (proton donor) is an active-site residue. Lys-57 functions as the Proton donor; for beta-elimination activity in the catalytic mechanism. DNA is bound by residues His-90, Arg-109, and Arg-150. An FPG-type zinc finger spans residues Gln-235–Val-269. Arg-259 acts as the Proton donor; for delta-elimination activity in catalysis.

This sequence belongs to the FPG family. In terms of assembly, monomer. Requires Zn(2+) as cofactor.

It catalyses the reaction Hydrolysis of DNA containing ring-opened 7-methylguanine residues, releasing 2,6-diamino-4-hydroxy-5-(N-methyl)formamidopyrimidine.. It carries out the reaction 2'-deoxyribonucleotide-(2'-deoxyribose 5'-phosphate)-2'-deoxyribonucleotide-DNA = a 3'-end 2'-deoxyribonucleotide-(2,3-dehydro-2,3-deoxyribose 5'-phosphate)-DNA + a 5'-end 5'-phospho-2'-deoxyribonucleoside-DNA + H(+). Involved in base excision repair of DNA damaged by oxidation or by mutagenic agents. Acts as a DNA glycosylase that recognizes and removes damaged bases. Has a preference for oxidized purines, such as 7,8-dihydro-8-oxoguanine (8-oxoG). Has AP (apurinic/apyrimidinic) lyase activity and introduces nicks in the DNA strand. Cleaves the DNA backbone by beta-delta elimination to generate a single-strand break at the site of the removed base with both 3'- and 5'-phosphates. In Vibrio atlanticus (strain LGP32) (Vibrio splendidus (strain Mel32)), this protein is Formamidopyrimidine-DNA glycosylase.